Consider the following 247-residue polypeptide: C-X-C motif chemokine 16 (247 aa).

The first 26 residues, 1–26 (MRRGFGPLALTLFLFFFALLTLPGDG), serve as a signal peptide directing secretion. The Extracellular portion of the chain corresponds to 27-198 (NQGSVAGSCY…EPGAGAGTQA (172 aa)). 2 disulfide bridges follow: Cys-35/Cys-65 and Cys-37/Cys-79. A disordered region spans residues 120–152 (IPEATEGKPPDTSTAVQFQSTQQSTFPSGAPSL). Over residues 131 to 147 (TSTAVQFQSTQQSTFPS) the composition is skewed to low complexity. A helical transmembrane segment spans residues 199–219 (LVPVLSLLAIVFFLVAAMVCV). Residues 220–247 (LCNRRVTRQSSSGLQLCYTPVEPRPQGL) are Cytoplasmic-facing.

Belongs to the intercrine alpha (chemokine CxC) family. In terms of processing, glycosylated.

It is found in the membrane. In terms of biological role, induces a strong chemotactic response. Induces calcium mobilization. Binds to CXCR6/Bonzo. Also acts as a scavenger receptor on macrophages, which specifically binds to OxLDL (oxidized low density lipoprotein), suggesting that it may be involved in pathophysiology such as atherogenesis. The polypeptide is C-X-C motif chemokine 16 (Cxcl16) (Rattus norvegicus (Rat)).